The chain runs to 60 residues: Toxin 4.9.6 (60 aa).

Intrachain disulfides connect cysteine 3/cysteine 22, cysteine 17/cysteine 38, cysteine 40/cysteine 52, and cysteine 53/cysteine 58.

The protein belongs to the three-finger toxin family. Short-chain subfamily. Orphan group XI sub-subfamily. Expressed by the venom gland.

The protein resides in the secreted. In Dendroaspis viridis (Western green mamba), this protein is Toxin 4.9.6.